We begin with the raw amino-acid sequence, 84 residues long: uncharacterized protein (84 aa).

This is an uncharacterized protein from Rickettsia prowazekii (strain Madrid E).